We begin with the raw amino-acid sequence, 864 residues long: Leucine--tRNA ligase (864 aa).

Residues 40–51 (PYPSGAGLHVGH) carry the 'HIGH' region motif. Positions 636–640 (KMSKS) match the 'KMSKS' region motif. Lysine 639 contacts ATP.

The protein belongs to the class-I aminoacyl-tRNA synthetase family.

It is found in the cytoplasm. The catalysed reaction is tRNA(Leu) + L-leucine + ATP = L-leucyl-tRNA(Leu) + AMP + diphosphate. The polypeptide is Leucine--tRNA ligase (Leptospira borgpetersenii serovar Hardjo-bovis (strain JB197)).